The following is a 173-amino-acid chain: tRNA-specific adenosine deaminase (173 aa).

The CMP/dCMP-type deaminase domain maps to 9 to 121 (EFDEKMMRYA…DYKTGAIGSR (113 aa)). Histidine 61 is a binding site for Zn(2+). The Proton donor role is filled by glutamate 63. 2 residues coordinate Zn(2+): cysteine 91 and cysteine 94.

The protein belongs to the cytidine and deoxycytidylate deaminase family. In terms of assembly, homodimer. Requires Zn(2+) as cofactor.

The catalysed reaction is adenosine(34) in tRNA + H2O + H(+) = inosine(34) in tRNA + NH4(+). Its function is as follows. Catalyzes the deamination of adenosine to inosine at the wobble position 34 of tRNA(Arg2). In Haemophilus influenzae (strain ATCC 51907 / DSM 11121 / KW20 / Rd), this protein is tRNA-specific adenosine deaminase.